Here is a 76-residue protein sequence, read N- to C-terminus: DNA-directed RNA polymerase subunit Rpo5 (76 aa).

This sequence belongs to the archaeal Rpo5/eukaryotic RPB5 RNA polymerase subunit family. As to quaternary structure, part of the RNA polymerase complex.

Its subcellular location is the cytoplasm. It catalyses the reaction RNA(n) + a ribonucleoside 5'-triphosphate = RNA(n+1) + diphosphate. Functionally, DNA-dependent RNA polymerase (RNAP) catalyzes the transcription of DNA into RNA using the four ribonucleoside triphosphates as substrates. This Archaeoglobus fulgidus (strain ATCC 49558 / DSM 4304 / JCM 9628 / NBRC 100126 / VC-16) protein is DNA-directed RNA polymerase subunit Rpo5.